Consider the following 358-residue polypeptide: Protein IncC (358 aa).

Residues 1–101 (MGAIHEETAN…VGSRRQEETG (101 aa)) form a disordered region. Over residues 88–99 (HRQEVGSRRQEE) the composition is skewed to basic and acidic residues.

This sequence belongs to the ParA family.

In terms of biological role, this is one of the proteins encoded by the trfB operon; it is involved in plasmid maintenance and replication. This is Protein IncC (incC) from Escherichia coli.